We begin with the raw amino-acid sequence, 283 residues long: Probable endonuclease 4 (283 aa).

Zn(2+) is bound by residues His-69, His-109, Glu-145, Asp-179, His-182, His-216, Asp-229, His-231, and Glu-261.

Belongs to the AP endonuclease 2 family. Zn(2+) is required as a cofactor.

It carries out the reaction Endonucleolytic cleavage to 5'-phosphooligonucleotide end-products.. Functionally, endonuclease IV plays a role in DNA repair. It cleaves phosphodiester bonds at apurinic or apyrimidinic (AP) sites, generating a 3'-hydroxyl group and a 5'-terminal sugar phosphate. This chain is Probable endonuclease 4, found in Campylobacter curvus (strain 525.92).